The following is a 159-amino-acid chain: MMMDILMYLFETYIHSDADLQVDQDELEDELLRAGFHQQDIYKALLWLEELAALQQSDAHSAISRCSAVSSTRVYSPKEMQRLDIECRGFLLFLEQINVLTTETREMVIDRVMGLETNEFELEDLKWIILMVLFNVPGNENAYTLMEELLYTKEQGILH.

This sequence belongs to the Smg family.

The sequence is that of Protein Smg homolog from Vibrio vulnificus (strain CMCP6).